A 203-amino-acid chain; its full sequence is Ras-related protein Rab-24 (203 aa).

Position 17 is a phosphotyrosine (Tyr17). The GTP site is built by Gly19, Lys20, Thr21, and Thr40. Thr21, Thr40, and Asp63 together coordinate Mg(2+). The interval 30 to 45 is switch I; it reads DRFLVGPYQNTIGAAF. A switch II region spans residues 63 to 80; sequence DTAGSERYEAMSRIYYRG. The GTP site is built by Gly66, Lys121, Asp123, and Lys156. Tyr172 carries the post-translational modification Phosphotyrosine. 2 S-geranylgeranyl cysteine lipidation sites follow: Cys200 and Cys201.

This sequence belongs to the small GTPase superfamily. Rab family. In terms of assembly, interacts with ZFYVE20. Does not interact with the GDP dissociation inhibitors ARHGDIA and ARHGDIB. Mg(2+) serves as cofactor. Post-translationally, prenylated; prenylation is required for RAB24 localization to autophagosomes. Isoprenylation is inefficient compared to other Rab family members. Phosphorylated at Tyr-17 and Tyr-172. Cytosolic pool of RAB24 is more phosphorylated than the membrane-associated pool. Widely expressed, with highest expression in brain.

It is found in the cytoplasm. The protein resides in the cytosol. Its subcellular location is the membrane. It localises to the cytoplasmic vesicle. The protein localises to the autophagosome membrane. It is found in the perinuclear region. The protein resides in the cytoskeleton. Its subcellular location is the spindle. It catalyses the reaction GTP + H2O = GDP + phosphate + H(+). Its activity is regulated as follows. Regulated by guanine nucleotide exchange factors (GEFs) which promote the exchange of bound GDP for free GTP. Regulated by GTPase activating proteins (GAPs) which increase the GTP hydrolysis activity. Inhibited by GDP dissociation inhibitors (GDIs). Its function is as follows. The small GTPases Rab are key regulators of intracellular membrane trafficking, from the formation of transport vesicles to their fusion with membranes. Rabs cycle between an inactive GDP-bound form and an active GTP-bound form that is able to recruit to membranes different sets of downstream effectors directly responsible for vesicle formation, movement, tethering and fusion. RAB24 is an atypical RAB protein that presents low GTPase activity and thereby exists predominantly in the GTP-bound active state. RAB24 is required for the clearance of late autophagic vacuoles under basal conditions. It is not needed for starvation-induced autophagy. Involved in the modulation of meiotic apparatus assembly and meiotic progression during oocyte maturation, possibly through regulation of kinetochore-microtubule interaction. The chain is Ras-related protein Rab-24 from Mus musculus (Mouse).